A 352-amino-acid polypeptide reads, in one-letter code: Homeobox protein Mohawk (352 aa).

The interval 19 to 53 is disordered; sequence GASERERGGRPYSGVLDSPHARPEVGIADGPPLKD. The homeobox; TALE-type DNA-binding region spans 71-132; that stretch reads VRHKRQALQD…NARRRLKNTV (62 aa). Disordered regions lie at residues 157–194 and 245–272; these read LSVS…IKSE and TRQR…SETE.

The protein belongs to the TALE/IRO homeobox family.

It is found in the nucleus. Functionally, may act as a morphogenetic regulator of cell adhesion. The polypeptide is Homeobox protein Mohawk (MKX) (Pongo abelii (Sumatran orangutan)).